A 269-amino-acid chain; its full sequence is MEERERGKEKGSKGKGRKKRGKKGAGEAKEESKEEDRGEEEEESVEADVPVEEMAAGGARPKKKSPKEKSKGEEHCYKVHKRVLRWMKSAERIKYELDNGEEEKWRGRSIEEIEEQKVLHDITEVLKLLRSKECDKFFARTGKYMKGGSERWNMVGVGILEEGGKKRVGNVEVGLFEGKGGENIIYHLMFKPTDFEEEGEGARPSFGRCDGVDAIEEGRISDMSGFQYPPGVRSEITSSGSEFRIVWKNQRDTSLVLRSLTVLRIPEIR.

A compositionally biased stretch (basic and acidic residues) spans 1 to 12 (MEERERGKEKGS). The segment at 1–74 (MEERERGKEK…SPKEKSKGEE (74 aa)) is disordered. The segment covering 13–23 (KGKGRKKRGKK) has biased composition (basic residues). Residues 24-36 (GAGEAKEESKEED) are compositionally biased toward basic and acidic residues. Over residues 37–51 (RGEEEEESVEADVPV) the composition is skewed to acidic residues.

The protein belongs to the UPF0329 family.

This Encephalitozoon cuniculi (strain GB-M1) (Microsporidian parasite) protein is UPF0329 protein ECU04_1660.